Consider the following 131-residue polypeptide: Antiholin (131 aa).

The Periplasmic portion of the chain corresponds to 1-15 (MTMIAWMQHFLETDE). Cytoplasmic loops occupy residues 1–52 (MTMI…SSFK) and 39–50 (FAKLNPNIKFSS). A helical membrane pass occupies residues 16-38 (TKLIYWLTFLMVCMVVDTVLGVL). Residues 53-75 (IKTGVLIKVSEMILALLAVPFAV) traverse the membrane as a helical segment. The Periplasmic segment spans residues 76–78 (PFP). The chain crosses the membrane as a helical span at residues 79 to 101 (AGLPLLYTVYTALCVSEIYSIFG). The Cytoplasmic portion of the chain corresponds to 102–131 (HLRLVDDKSDFLEILENFFKRTSGKNKEDK).

Belongs to the bacteriophage holin family. phi29likevirus holin subfamily. As to quaternary structure, homomultimer. Interacts with isoform Antiholin; this interaction blocks the holin homomultimerization and delays host cell lysis.

The protein resides in the host cell inner membrane. In terms of biological role, accumulates harmlessly in the cytoplasmic membrane until it reaches a critical concentration that triggers the formation of micron-scale pores (holes) causing host cell membrane disruption and endolysin escape into the periplasmic space. Determines the precise timing of host cell lysis. Participates with the endolysin and spanin proteins in the sequential events which lead to the programmed host cell lysis releasing the mature viral particles from the host cell. Functionally, counteracts the aggregation of the holin molecules and thus of pore formation. In Bacillus subtilis (Bacteriophage PZA), this protein is Antiholin (14).